A 512-amino-acid polypeptide reads, in one-letter code: Methionine--tRNA ligase (512 aa).

The 'HIGH' region motif lies at Tyr12–His22. The 'KMSKS' region motif lies at Lys295–Ser299. Lys298 is an ATP binding site.

This sequence belongs to the class-I aminoacyl-tRNA synthetase family. MetG type 2B subfamily. In terms of assembly, monomer.

The protein localises to the cytoplasm. The catalysed reaction is tRNA(Met) + L-methionine + ATP = L-methionyl-tRNA(Met) + AMP + diphosphate. In terms of biological role, is required not only for elongation of protein synthesis but also for the initiation of all mRNA translation through initiator tRNA(fMet) aminoacylation. This chain is Methionine--tRNA ligase, found in Rickettsia felis (strain ATCC VR-1525 / URRWXCal2) (Rickettsia azadi).